Consider the following 64-residue polypeptide: Large ribosomal subunit protein uL29 (64 aa).

The protein belongs to the universal ribosomal protein uL29 family.

This chain is Large ribosomal subunit protein uL29, found in Pseudomonas entomophila (strain L48).